We begin with the raw amino-acid sequence, 333 residues long: Ornithine carbamoyltransferase (333 aa).

Carbamoyl phosphate-binding positions include serine 56–threonine 59, arginine 107, and histidine 134–glutamine 137. L-ornithine contacts are provided by residues asparagine 167, aspartate 231, and serine 235–methionine 236. Carbamoyl phosphate-binding positions include cysteine 273–leucine 274 and arginine 318.

This sequence belongs to the aspartate/ornithine carbamoyltransferase superfamily. OTCase family.

The protein resides in the cytoplasm. It carries out the reaction carbamoyl phosphate + L-ornithine = L-citrulline + phosphate + H(+). It functions in the pathway amino-acid degradation; L-arginine degradation via ADI pathway; carbamoyl phosphate from L-arginine: step 2/2. Functionally, reversibly catalyzes the transfer of the carbamoyl group from carbamoyl phosphate (CP) to the N(epsilon) atom of ornithine (ORN) to produce L-citrulline. This chain is Ornithine carbamoyltransferase, found in Clostridium botulinum (strain 657 / Type Ba4).